Reading from the N-terminus, the 399-residue chain is Lysosomal acid lipase/cholesteryl ester hydrolase (399 aa).

The first 27 residues, 1-27 (MKMRFLGLVVCLVLWTLHSEGSGGKLT), serve as a signal peptide directing secretion. Positions 28 to 76 (AVDPETNMNVSEIISYWGFPSEEYLVETEDGYILCLNRIPHGRKNHSDK) are cleaved as a propeptide — removed in mature form. N-linked (GlcNAc...) asparagine glycans are attached at residues Asn36, Asn72, Asn101, and Asn161. An AB hydrolase-1 domain is found at 80 to 380 (PVVFLQHGLL…EWEHLDFIWG (301 aa)). Ser174 acts as the Charge relay system in catalysis. N-linked (GlcNAc...) asparagine glycosylation is found at Asn273 and Asn321. His374 serves as the catalytic Charge relay system.

Belongs to the AB hydrolase superfamily. Lipase family. Monomer. Post-translationally, glycosylation is not essential for catalytic activity. In terms of tissue distribution, most abundantly expressed in brain, lung, kidney and mammary gland, a moderate expression seen in placenta and expressed at low levels in the liver and heart.

The protein resides in the lysosome. The enzyme catalyses a sterol ester + H2O = a sterol + a fatty acid + H(+). The catalysed reaction is cholesteryl (9Z-octadecenoate) + H2O = cholesterol + (9Z)-octadecenoate + H(+). It catalyses the reaction a triacylglycerol + H2O = a 1,2-diacylglycerol + a fatty acid + H(+). It carries out the reaction 1,2-di-(9Z-octadecenoyl)-glycerol + (9Z)-octadecenoate + H(+) = 1,2,3-tri-(9Z-octadecenoyl)-glycerol + H2O. The enzyme catalyses a 1,2-diacylglycerol + H2O = a 1-acylglycerol + a fatty acid + H(+). The catalysed reaction is 1,2-di-(9Z-octadecenoyl)-glycerol + H2O = 1-(9Z-octadecenoyl)-glycerol + (9Z)-octadecenoate + H(+). It catalyses the reaction a 1,3-diacylglycerol + H2O = a 1-acylglycerol + a fatty acid + H(+). It carries out the reaction 1,3-di-(9Z-octadecenoyl)-glycerol + H2O = 1-(9Z-octadecenoyl)-glycerol + (9Z)-octadecenoate + H(+). Functionally, catalyzes the deacylation of cholesteryl ester core lipids of endocytosed low density lipoproteins to generate free fatty acids and cholesterol. Hydrolyzes triglycerides (1,2,3-triacylglycerol) and diglycerides (such as 1,2-diacylglycerol and 1,3-diacylglycerol) with preference for the acyl moieties at the sn-1 or sn-3 positions. The protein is Lysosomal acid lipase/cholesteryl ester hydrolase (LIPA) of Homo sapiens (Human).